We begin with the raw amino-acid sequence, 190 residues long: Sec-independent protein translocase protein TatB (190 aa).

The helical transmembrane segment at 2–22 (LPDIGGTELLVIAAVALIVVG) threads the bilayer. The segment at 130-190 (IVSKPARKPP…KASTNSDITS (61 aa)) is disordered. Residues 134-144 (PARKPPAKKAA) are compositionally biased toward basic residues. The segment covering 145 to 163 (AKPAAKAELVSKPKASAKA) has biased composition (low complexity).

It belongs to the TatB family. The Tat system comprises two distinct complexes: a TatABC complex, containing multiple copies of TatA, TatB and TatC subunits, and a separate TatA complex, containing only TatA subunits. Substrates initially bind to the TatABC complex, which probably triggers association of the separate TatA complex to form the active translocon.

The protein localises to the cell inner membrane. Part of the twin-arginine translocation (Tat) system that transports large folded proteins containing a characteristic twin-arginine motif in their signal peptide across membranes. Together with TatC, TatB is part of a receptor directly interacting with Tat signal peptides. TatB may form an oligomeric binding site that transiently accommodates folded Tat precursor proteins before their translocation. This Caulobacter sp. (strain K31) protein is Sec-independent protein translocase protein TatB.